A 162-amino-acid chain; its full sequence is Transcription elongation factor GreA (162 aa).

Residues S44–I69 are a coiled coil.

Belongs to the GreA/GreB family.

In terms of biological role, necessary for efficient RNA polymerase transcription elongation past template-encoded arresting sites. The arresting sites in DNA have the property of trapping a certain fraction of elongating RNA polymerases that pass through, resulting in locked ternary complexes. Cleavage of the nascent transcript by cleavage factors such as GreA or GreB allows the resumption of elongation from the new 3'terminus. GreA releases sequences of 2 to 3 nucleotides. The chain is Transcription elongation factor GreA from Rickettsia bellii (strain RML369-C).